A 236-amino-acid polypeptide reads, in one-letter code: Leucyl/phenylalanyl-tRNA--protein transferase (236 aa).

This sequence belongs to the L/F-transferase family.

Its subcellular location is the cytoplasm. The catalysed reaction is N-terminal L-lysyl-[protein] + L-leucyl-tRNA(Leu) = N-terminal L-leucyl-L-lysyl-[protein] + tRNA(Leu) + H(+). It carries out the reaction N-terminal L-arginyl-[protein] + L-leucyl-tRNA(Leu) = N-terminal L-leucyl-L-arginyl-[protein] + tRNA(Leu) + H(+). It catalyses the reaction L-phenylalanyl-tRNA(Phe) + an N-terminal L-alpha-aminoacyl-[protein] = an N-terminal L-phenylalanyl-L-alpha-aminoacyl-[protein] + tRNA(Phe). In terms of biological role, functions in the N-end rule pathway of protein degradation where it conjugates Leu, Phe and, less efficiently, Met from aminoacyl-tRNAs to the N-termini of proteins containing an N-terminal arginine or lysine. The protein is Leucyl/phenylalanyl-tRNA--protein transferase of Vibrio atlanticus (strain LGP32) (Vibrio splendidus (strain Mel32)).